We begin with the raw amino-acid sequence, 406 residues long: Acetylornithine aminotransferase (406 aa).

Pyridoxal 5'-phosphate contacts are provided by residues 108 to 109 (GA) and F141. Residue R144 participates in N(2)-acetyl-L-ornithine binding. Residue 226 to 229 (DEVQ) coordinates pyridoxal 5'-phosphate. At K255 the chain carries N6-(pyridoxal phosphate)lysine. T283 is a binding site for N(2)-acetyl-L-ornithine. Residue T284 coordinates pyridoxal 5'-phosphate.

Belongs to the class-III pyridoxal-phosphate-dependent aminotransferase family. ArgD subfamily. In terms of assembly, homodimer. Pyridoxal 5'-phosphate serves as cofactor.

The protein localises to the cytoplasm. The catalysed reaction is N(2)-acetyl-L-ornithine + 2-oxoglutarate = N-acetyl-L-glutamate 5-semialdehyde + L-glutamate. It functions in the pathway amino-acid biosynthesis; L-arginine biosynthesis; N(2)-acetyl-L-ornithine from L-glutamate: step 4/4. In Pseudomonas putida (strain ATCC 47054 / DSM 6125 / CFBP 8728 / NCIMB 11950 / KT2440), this protein is Acetylornithine aminotransferase.